A 502-amino-acid polypeptide reads, in one-letter code: Histidine--tRNA ligase (502 aa).

This sequence belongs to the class-II aminoacyl-tRNA synthetase family. Homodimer.

It is found in the cytoplasm. It carries out the reaction tRNA(His) + L-histidine + ATP = L-histidyl-tRNA(His) + AMP + diphosphate + H(+). This Brucella abortus (strain S19) protein is Histidine--tRNA ligase.